The chain runs to 497 residues: Bifunctional protein GlmU (497 aa).

The segment at 1–241 (MSPETIGPAA…RWQVEGANDR (241 aa)) is pyrophosphorylase. UDP-N-acetyl-alpha-D-glucosamine-binding positions include 14 to 17 (LAAG), Lys-28, Gln-81, 86 to 87 (GT), 112 to 114 (YGD), Gly-151, Glu-166, Asn-181, and Asn-239. Asp-114 is a Mg(2+) binding site. Asn-239 is a Mg(2+) binding site. The tract at residues 242–262 (IQLSALAAEHNRRIIESWMRA) is linker. The interval 263-497 (GVTVVDPATT…QATIEEGKQA (235 aa)) is N-acetyltransferase. Residues Arg-344 and Lys-362 each contribute to the UDP-N-acetyl-alpha-D-glucosamine site. The active-site Proton acceptor is His-374. UDP-N-acetyl-alpha-D-glucosamine is bound by residues Tyr-377 and Asn-388. Acetyl-CoA contacts are provided by residues 397–398 (NY), Ser-416, and Ala-434.

In the N-terminal section; belongs to the N-acetylglucosamine-1-phosphate uridyltransferase family. This sequence in the C-terminal section; belongs to the transferase hexapeptide repeat family. Homotrimer. Mg(2+) serves as cofactor.

It localises to the cytoplasm. It catalyses the reaction alpha-D-glucosamine 1-phosphate + acetyl-CoA = N-acetyl-alpha-D-glucosamine 1-phosphate + CoA + H(+). It carries out the reaction N-acetyl-alpha-D-glucosamine 1-phosphate + UTP + H(+) = UDP-N-acetyl-alpha-D-glucosamine + diphosphate. It functions in the pathway nucleotide-sugar biosynthesis; UDP-N-acetyl-alpha-D-glucosamine biosynthesis; N-acetyl-alpha-D-glucosamine 1-phosphate from alpha-D-glucosamine 6-phosphate (route II): step 2/2. It participates in nucleotide-sugar biosynthesis; UDP-N-acetyl-alpha-D-glucosamine biosynthesis; UDP-N-acetyl-alpha-D-glucosamine from N-acetyl-alpha-D-glucosamine 1-phosphate: step 1/1. The protein operates within bacterial outer membrane biogenesis; LPS lipid A biosynthesis. Its function is as follows. Catalyzes the last two sequential reactions in the de novo biosynthetic pathway for UDP-N-acetylglucosamine (UDP-GlcNAc). The C-terminal domain catalyzes the transfer of acetyl group from acetyl coenzyme A to glucosamine-1-phosphate (GlcN-1-P) to produce N-acetylglucosamine-1-phosphate (GlcNAc-1-P), which is converted into UDP-GlcNAc by the transfer of uridine 5-monophosphate (from uridine 5-triphosphate), a reaction catalyzed by the N-terminal domain. This is Bifunctional protein GlmU from Paenarthrobacter aurescens (strain TC1).